We begin with the raw amino-acid sequence, 423 residues long: Polyglutamylase complex subunit TTLL1 (423 aa).

Positions 1 to 367 constitute a TTL domain; that stretch reads MAGRVKWVTD…NGEIPDCKWN (367 aa). ATP contacts are provided by residues lysine 138, 144–145, 181–184, and 194–196; these read QG, SVYI, and KFD. Residue glutamine 144 participates in a protein binding. Arginine 220 is an L-glutamate binding site. 241–242 serves as a coordination point for ATP; the sequence is TN. Residue lysine 259 coordinates L-glutamate. 3 residues coordinate Mg(2+): aspartate 313, glutamate 326, and asparagine 328. Lysine 344 lines the L-glutamate pocket. The interval 390-423 is disordered; the sequence is DGAERELRNRPGQPVGPRAGRSRDSGRSVLTTWK.

It belongs to the tubulin polyglutamylase family. As to quaternary structure, part of the neuronal tubulin polyglutamylase complex which contains TPGS1, TPGS2, TTLL1, LRRC49 and NICN1. Interacts with PCM1, CSTPP1 and LRRC49. Mg(2+) is required as a cofactor. As to expression, highly expressed in brain, heart and kidney. Expressed in liver, lung, muscle, spleen, testis and trachea. In the brain, expressed in ependymal cilia, cortex, corpus callosum and striatum. Expressed in blastomere.

Its subcellular location is the cytoplasm. It is found in the cytoskeleton. It localises to the cilium basal body. The protein localises to the cilium axoneme. The protein resides in the cell projection. Its subcellular location is the cilium. It is found in the flagellum. It carries out the reaction (L-glutamyl)(n)-gamma-L-glutamyl-L-glutamyl-[protein] + L-glutamate + ATP = (L-glutamyl)(n+1)-gamma-L-glutamyl-L-glutamyl-[protein] + ADP + phosphate + H(+). Its function is as follows. Catalytic subunit of a polyglutamylase complex which modifies tubulin, generating side chains of glutamate on the gamma-carboxyl group of specific glutamate residues within the C-terminal tail of tubulin. Probably involved in the side-chain elongation step of the polyglutamylation reaction rather than the initiation step. Modifies both alpha- and beta-tubulins with a preference for the alpha-tail. Unlike most polyglutamylases of the tubulin--tyrosine ligase family, only displays a catalytic activity when in complex with other proteins as it is most likely lacking domains important for autonomous activity. Part of the neuronal tubulin polyglutamylase complex. Mediates cilia and flagella polyglutamylation which is essential for their biogenesis and motility. Involved in respiratory motile cilia function through the regulation of beating asymmetry. Essential for sperm flagella biogenesis, motility and male fertility. Also mediates glutamylation of non-tubulin proteins. Involved in KLF4 glutamylation which impedes its ubiquitination, thereby leading to somatic cell reprogramming, pluripotency maintenance and embryogenesis. This is Polyglutamylase complex subunit TTLL1 from Mus musculus (Mouse).